The following is a 258-amino-acid chain: Tegument protein VP22 (258 aa).

Residues 66 to 143 are disordered; the sequence is VQPAARGRDR…RAPPGANAVA (78 aa). The span at 77–118 shows a compositional bias: low complexity; the sequence is AAAGTTVAAPAAAPARRSSSRASSRPPRAAADPPVLRPATRG. Residues 131 to 134 carry the Nuclear localization signal motif; that stretch reads PRPR. The Nuclear export signal motif lies at 204 to 216; the sequence is LDRMLKSAAIRIL. The interval 234–258 is disordered; sequence RAQRPAARGSTSGGESRLRGERARP. Over residues 249 to 258 the composition is skewed to basic and acidic residues; sequence SRLRGERARP.

This sequence belongs to the alphaherpesvirinae VP22 tegument protein family. As to quaternary structure, interacts with gE (via C-terminus); this interaction is necessary for the recruitment of VP22 to the Golgi and its packaging into virions. Interacts with gM (via C-terminus). Interacts with VP16; this interaction allows the formation of a tripartite complex composed of VP16, VP22 and UL41/VHS. Interacts with the capsid-binding protein UL16. Interacts with host CGAS. Highly phosphorylated in the host cell. Packaging is selective for underphosphorylated forms.

Its subcellular location is the virion tegument. The protein localises to the host cytoplasm. It is found in the host nucleus. It localises to the host Golgi apparatus. Functionally, tegument protein that plays different roles during the time course of infection. Participates in both the accumulation of viral mRNAs and viral protein translation at late time of infection. Modulates the RNase activity of the virion host shutoff protein UL41 probably to ensure necessary levels of key cellular mRNAs and proteins. Plays a role in microtubule reorganization that occurs after viral infection by stabilizing microtubule network. Plays a role in the inhibition of host innate immune system by targeting the CGAS enzymatic activity which is the principal cytosolic DNA sensor that detects invading viral DNA. Acts by mediating disruption of liquid-like droplets in which CGAS is activated, thereby preventing CGAS activity. This Bovine herpesvirus 1.1 (strain Cooper) (BoHV-1) protein is Tegument protein VP22.